The chain runs to 383 residues: Mating-type protein MAT-1 (383 aa).

The alpha box DNA-binding region spans 60-117 (KARKALNAFVGFRCYYVTIPMFKSWPMKKLSNLIGLLWEADPNKSLWSLMAKAWSTIR).

This sequence belongs to the MATALPHA1 family.

It localises to the nucleus. Its function is as follows. Mating type proteins are sequence specific DNA-binding proteins that act as master switches in fungal differentiation by controlling gene expression in a cell type-specific fashion. Transcriptional activator that induces the transcription of alpha-specific genes. The sequence is that of Mating-type protein MAT-1 (MAT1) from Cochliobolus heterostrophus (Southern corn leaf blight fungus).